Reading from the N-terminus, the 276-residue chain is Malectin-B (276 aa).

An N-terminal signal peptide occupies residues 1-26 (MLSIRTVLGPLAAILLTVIGPFGAHG). Topologically, residues 27–253 (SGLADKVMWA…TPNPYASDNS (227 aa)) are lumenal. 5 residues coordinate a carbohydrate: Tyr-67, Tyr-89, Tyr-116, Phe-117, and Asp-186. The disordered stretch occupies residues 202–249 (DVPQLQPHPGLEKKEEEEEEEEEEGSPSKKQSNKNRVQSGPRTPNPYA). Over residues 216 to 226 (EEEEEEEEEEG) the composition is skewed to acidic residues. Over residues 229-249 (SKKQSNKNRVQSGPRTPNPYA) the composition is skewed to polar residues. N-linked (GlcNAc...) asparagine glycosylation occurs at Asn-252. Residues 254-274 (SLMFPILVAFGVFIPTLFCLC) form a helical membrane-spanning segment. The Cytoplasmic portion of the chain corresponds to 275–276 (RL).

It belongs to the malectin family.

The protein resides in the endoplasmic reticulum membrane. In terms of biological role, carbohydrate-binding protein with a strong ligand preference for Glc2-N-glycan. May play a role in the early steps of protein N-glycosylation. Can bind di- or higher oligomers but not monomers of glucose, including maltose, maltotriose, maltotetraose, maltoheptaose, nigerose, kojibose, cellobiose and isomaltose, although based on their subcellular locations, these are unlikely to all be physiological ligands. The protein is Malectin-B of Xenopus laevis (African clawed frog).